Here is a 392-residue protein sequence, read N- to C-terminus: Chalcone synthase B (392 aa).

Cysteine 167 is an active-site residue.

This sequence belongs to the thiolase-like superfamily. Chalcone/stilbene synthases family. In terms of tissue distribution, expressed at low level in seedlings after illumination with UV light. No expression in flowers or tissue culture.

It catalyses the reaction (E)-4-coumaroyl-CoA + 3 malonyl-CoA + 3 H(+) = 2',4,4',6'-tetrahydroxychalcone + 3 CO2 + 4 CoA. It participates in secondary metabolite biosynthesis; flavonoid biosynthesis. The primary product of this enzyme is 4,2',4',6'-tetrahydroxychalcone (also termed naringenin-chalcone or chalcone) which can under specific conditions spontaneously isomerize into naringenin. The polypeptide is Chalcone synthase B (CHSB) (Petunia hybrida (Petunia)).